A 217-amino-acid polypeptide reads, in one-letter code: 3,4-dihydroxy-2-butanone 4-phosphate synthase (217 aa).

D-ribulose 5-phosphate contacts are provided by residues 37-38 (RE), Asp42, 150-154 (RGGHT), and Glu174. Glu38 is a Mg(2+) binding site. His153 contributes to the Mg(2+) binding site.

This sequence belongs to the DHBP synthase family. Homodimer. The cofactor is Mg(2+). Requires Mn(2+) as cofactor.

The enzyme catalyses D-ribulose 5-phosphate = (2S)-2-hydroxy-3-oxobutyl phosphate + formate + H(+). It functions in the pathway cofactor biosynthesis; riboflavin biosynthesis; 2-hydroxy-3-oxobutyl phosphate from D-ribulose 5-phosphate: step 1/1. In terms of biological role, catalyzes the conversion of D-ribulose 5-phosphate to formate and 3,4-dihydroxy-2-butanone 4-phosphate. The chain is 3,4-dihydroxy-2-butanone 4-phosphate synthase from Escherichia coli O127:H6 (strain E2348/69 / EPEC).